The sequence spans 334 residues: Phospho-N-acetylmuramoyl-pentapeptide-transferase (334 aa).

10 helical membrane-spanning segments follow: residues 11 to 31 (GAGLTALAGALALGPVVIPLM), 55 to 75 (PTMGGVIFIIPAILATLIFAP), 84 to 104 (LIIALVLTVGHGLVGFADDYI), 124 to 144 (VGLAAVLGYGAVEVLGLGTAV), 158 to 178 (PLYYLLVLIMVWGTASAVNFA), 184 to 204 (LLGGLSVITFSFYGLVVALAL), 205 to 225 (GQTDMAVLGTALVGGVLGFLH), 233 to 253 (IFMGDVGSFALGGALAALAVL), 258 to 278 (FLLVIVGAVYVIEVISVILQV), and 311 to 331 (LFWGAGLLFTLLGWLVLPGML).

It belongs to the glycosyltransferase 4 family. MraY subfamily. It depends on Mg(2+) as a cofactor.

Its subcellular location is the cell membrane. The catalysed reaction is UDP-N-acetyl-alpha-D-muramoyl-L-alanyl-gamma-D-glutamyl-meso-2,6-diaminopimeloyl-D-alanyl-D-alanine + di-trans,octa-cis-undecaprenyl phosphate = di-trans,octa-cis-undecaprenyl diphospho-N-acetyl-alpha-D-muramoyl-L-alanyl-D-glutamyl-meso-2,6-diaminopimeloyl-D-alanyl-D-alanine + UMP. It participates in cell wall biogenesis; peptidoglycan biosynthesis. In terms of biological role, catalyzes the initial step of the lipid cycle reactions in the biosynthesis of the cell wall peptidoglycan: transfers peptidoglycan precursor phospho-MurNAc-pentapeptide from UDP-MurNAc-pentapeptide onto the lipid carrier undecaprenyl phosphate, yielding undecaprenyl-pyrophosphoryl-MurNAc-pentapeptide, known as lipid I. The sequence is that of Phospho-N-acetylmuramoyl-pentapeptide-transferase from Symbiobacterium thermophilum (strain DSM 24528 / JCM 14929 / IAM 14863 / T).